Here is a 433-residue protein sequence, read N- to C-terminus: Putative ankyrin repeat protein R578 (433 aa).

ANK repeat units follow at residues asparagine 166–glutamate 195, aspartate 197–leucine 224, valine 356–serine 386, and proline 388–glutamate 415.

This chain is Putative ankyrin repeat protein R578, found in Acanthamoeba polyphaga mimivirus (APMV).